A 264-amino-acid chain; its full sequence is Thiazole synthase (264 aa).

The active-site Schiff-base intermediate with DXP is lysine 106. 1-deoxy-D-xylulose 5-phosphate-binding positions include glycine 167, 193–194, and 215–216; these read AG and NS.

The protein belongs to the ThiG family. In terms of assembly, homotetramer. Forms heterodimers with either ThiH or ThiS.

It is found in the cytoplasm. The enzyme catalyses [ThiS sulfur-carrier protein]-C-terminal-Gly-aminoethanethioate + 2-iminoacetate + 1-deoxy-D-xylulose 5-phosphate = [ThiS sulfur-carrier protein]-C-terminal Gly-Gly + 2-[(2R,5Z)-2-carboxy-4-methylthiazol-5(2H)-ylidene]ethyl phosphate + 2 H2O + H(+). Its pathway is cofactor biosynthesis; thiamine diphosphate biosynthesis. Functionally, catalyzes the rearrangement of 1-deoxy-D-xylulose 5-phosphate (DXP) to produce the thiazole phosphate moiety of thiamine. Sulfur is provided by the thiocarboxylate moiety of the carrier protein ThiS. In vitro, sulfur can be provided by H(2)S. This Pseudomonas savastanoi pv. phaseolicola (strain 1448A / Race 6) (Pseudomonas syringae pv. phaseolicola (strain 1448A / Race 6)) protein is Thiazole synthase.